We begin with the raw amino-acid sequence, 404 residues long: Multidrug resistance protein MdtG (404 aa).

The next 11 helical transmembrane spans lie at 19-39 (LGCF…PLYV), 56-76 (LVFS…GGLA), 90-110 (LGMA…QFLI), 113-133 (ALLG…ATQV), 144-164 (TLST…GLLA), 171-191 (PVFF…FFFI), 222-242 (LFVT…ILTL), 254-274 (IAFI…LSAP), 288-308 (ILIV…FVQT), 317-337 (FLLG…LVYN), and 376-396 (AVFC…WNSL).

It belongs to the major facilitator superfamily. DHA1 family. MdtG (TC 2.A.1.2.20) subfamily.

Its subcellular location is the cell inner membrane. The protein is Multidrug resistance protein MdtG of Salmonella choleraesuis (strain SC-B67).